A 379-amino-acid chain; its full sequence is ATP phosphoribosyltransferase regulatory subunit (379 aa).

It belongs to the class-II aminoacyl-tRNA synthetase family. HisZ subfamily. In terms of assembly, heteromultimer composed of HisG and HisZ subunits.

It localises to the cytoplasm. It functions in the pathway amino-acid biosynthesis; L-histidine biosynthesis; L-histidine from 5-phospho-alpha-D-ribose 1-diphosphate: step 1/9. Its function is as follows. Required for the first step of histidine biosynthesis. May allow the feedback regulation of ATP phosphoribosyltransferase activity by histidine. This Sinorhizobium fredii (strain NBRC 101917 / NGR234) protein is ATP phosphoribosyltransferase regulatory subunit.